The chain runs to 440 residues: Trigger factor (440 aa).

The 86-residue stretch at 163–248 (GMVLTVDFSF…LKEIKKKELP (86 aa)) folds into the PPIase FKBP-type domain.

The protein belongs to the FKBP-type PPIase family. Tig subfamily.

The protein resides in the cytoplasm. It carries out the reaction [protein]-peptidylproline (omega=180) = [protein]-peptidylproline (omega=0). Functionally, involved in protein export. Acts as a chaperone by maintaining the newly synthesized protein in an open conformation. Functions as a peptidyl-prolyl cis-trans isomerase. The chain is Trigger factor from Trichlorobacter lovleyi (strain ATCC BAA-1151 / DSM 17278 / SZ) (Geobacter lovleyi).